Consider the following 382-residue polypeptide: F-box protein At3g27290 (382 aa).

Residues 16–105 (RKLELGLGEF…VDQMLFETLS (90 aa)) enclose the F-box domain.

This Arabidopsis thaliana (Mouse-ear cress) protein is F-box protein At3g27290.